A 344-amino-acid polypeptide reads, in one-letter code: Oxygen sensor histidine kinase NreB (344 aa).

Positions 58, 61, 73, and 76 each coordinate [4Fe-4S] cluster. The Histidine kinase domain maps to 152–344 (RISRELHDSV…GTNVTLNIPI (193 aa)). H158 carries the phosphohistidine; by autocatalysis modification.

It depends on [4Fe-4S] cluster as a cofactor. In terms of processing, autophosphorylated.

It localises to the cytoplasm. It carries out the reaction ATP + protein L-histidine = ADP + protein N-phospho-L-histidine.. Its function is as follows. Member of the two-component regulatory system NreB/NreC involved in the control of dissimilatory nitrate/nitrite reduction in response to oxygen. NreB functions as a direct oxygen sensor histidine kinase which is autophosphorylated, in the absence of oxygen, probably at the conserved histidine residue, and transfers its phosphate group probably to a conserved aspartate residue of NreC. NreB/NreC activates the expression of the nitrate (narGHJI) and nitrite (nir) reductase operons, as well as the putative nitrate transporter gene narT. The chain is Oxygen sensor histidine kinase NreB (nreB) from Staphylococcus aureus (strain JH1).